Reading from the N-terminus, the 41-residue chain is Bacteriocin (41 aa).

The cysteines at positions 9 and 14 are disulfide-linked.

The protein resides in the secreted. In terms of biological role, bacteriocin active against S.aureus, S.typhi, B.thuringiensis, Klebsiella sp., E.coli KL16 and E.coli Gj137. In Lactococcus sp, this protein is Bacteriocin.